A 1392-amino-acid chain; its full sequence is MSALLRPARWLLGAAAVPRLPLSLRLPAGGPGRLPSVVRVAAAGGRPAAGELLSQARLYAIVAEKKDLPEEPAPVRRSGSQFDWALMRLDNSVRRTGRITKGLLQKVFESTCRSGSPGSNQALLLLRSCGSLLPELSLAERTEFAHKIWDKLQQLGTVYDVSHYNALLKVYLQNEYRFSPTDFLAKMEGANIQPNRVTYQRLIAAYCSVGDIEGASKILGFMKTRDLPITEAVFSALVTGHARAGDMESAENILTVMKQAGIEPGPDTYLALLNAHAEKGDIDHVKQILEKVEKSDHYFMDRDFLQIIVSFSKAGYPQYVSEILEKITYERRSIPDAMNLILLLVTEKLEDTAFQVLLALPLARDETSSSFGSFFLRHCVTMDTPAEKLIDYCKRLRDAKVHSSSLQFTLHCALQANKTALAKAVMEALRDEGFPIRTHYFWPLLVGHQKTKNVQGIIDILKIMKEMGVDPDQETYINYVFPCFGSVQSARAALQENKCLPKSTTFAQAEVRNEAINGNLQNILSFLESNALPFSFNSLRGSLILGFRRSMNIDLWSKITELLYKDDRYCQKPPGPTEAVGYFLYNLIDSMSDSEVQAKEERLRQYFHQLREMNVKVSENIYKGICNLLDNYHVPELIKDVKVLVDREKIDSRKTSQFTSSDLESTLEKLKAEGHPVGDPLKQLILLLCSEENMQKALEVKAKYESDMVIGGYAALINLCCRHDNAEDALNLKQEFDRLDPSAVLDTAKYVALVKVLGKHGRVQDAINILKEMKEKDVVIKDAAVLSFFHILNGAALRGEIETVKQLHEAIVTLGLAKPSSNISFPLVTVHLEKDDLPAALEASIACHEKYKVLPRIHDVLCKLIEKGETDLIQKAMDFVSQEQGEMSMLYDLFFAFLQTGNYKEAKKIIETPGIRARPTRLQWFCDRCIANNQVETLEKLVELTEKLFECDRDQMYYNLLKLYKISGDWQRADAVWNKMQEENLIPRERTLRLLAGILKTSNQEVPFDVPELWFGDDRSSLSSSSPSAGDTVTEKMLLSDCRLKKSKDAYNIFLKAEKQDVVFSSEAYSTLVGLLLSKDDFTRAMHVKDFAETHIKGFTLNGAASSLLIIAQVRRDYLKVALETLKAALDLEQVPSELAVTRLIQALALQGDVKSIETIQKMVKGLDAIELSRMVFINNIALAQMKNNEIDAAIENIEHMLASENQTVEHQYFGLSYLFRKVIEEQMEPALEKLSIMSERLANQFALYKPVTDLFLQLVDSGKVDEARALLERCGAIAEQTSILSVFCLRTSQKPKKAPVLKTLLELIPELRENDRVYSCSMKSYVADKDVASAKALYEHLTAKNMKLDDLFLKRYASLLKDVGEPVPFTEPPESFGFYIKQLKEARENPS.

The transit peptide at 1–77 (MSALLRPARW…LPEEPAPVRR (77 aa)) directs the protein to the mitochondrion. PPR repeat units lie at residues 125–159 (LLRSCGSLLPELSLAERTEFAHKIWDKLQQLGTVY), 160–194 (DVSHYNALLKVYLQNEYRFSPTDFLAKMEGANIQP), 195–229 (NRVTYQRLIAAYCSVGDIEGASKILGFMKTRDLPI), 230–264 (TEAVFSALVTGHARAGDMESAENILTVMKQAGIEP), 265–299 (GPDTYLALLNAHAEKGDIDHVKQILEKVEKSDHYF), 300–334 (MDRDFLQIIVSFSKAGYPQYVSEILEKITYERRSI), 402–436 (HSSSLQFTLHCALQANKTALAKAVMEALRDEGFPI), 437–471 (RTHYFWPLLVGHQKTKNVQGIIDILKIMKEMGVDP), 677–708 (VGDPLKQLILLLCSEENMQKALEVKAKYESDM), 709–745 (VIGGYAALINLCCRHDNAEDALNLKQEFDRLDPSAVL), 746–783 (DTAKYVALVKVLGKHGRVQDAINILKEMKEKDVVIKDA), 784–820 (AVLSFFHILNGAALRGEIETVKQLHEAIVTLGLAKPS), 821–856 (SNISFPLVTVHLEKDDLPAALEASIACHEKYKVLPR), and 953–987 (RDQMYYNLLKLYKISGDWQRADAVWNKMQEENLIP). An N6-acetyllysine mark is found at lysine 151 and lysine 186. An N6-acetyllysine modification is found at lysine 291. Lysine 462 is modified (N6-acetyllysine). Lysine 749 carries the N6-acetyllysine modification. 3 positions are modified to phosphoserine: serine 1025, serine 1026, and serine 1028. 6 PPR repeats span residues 1030–1064 (GDTVTEKMLLSDCRLKKSKDAYNIFLKAEKQDVVF), 1065–1101 (SSEAYSTLVGLLLSKDDFTRAMHVKDFAETHIKGFTL), 1102–1136 (NGAASSLLIIAQVRRDYLKVALETLKAALDLEQVP), 1137–1173 (SELAVTRLIQALALQGDVKSIETIQKMVKGLDAIELS), 1174–1208 (RMVFINNIALAQMKNNEIDAAIENIEHMLASENQT), and 1315–1349 (NDRVYSCSMKSYVADKDVASAKALYEHLTAKNMKL). A Phosphoserine modification is found at serine 1137.

Component of mRNP complexes associated with HNRPA1. Component of the complex, at least composed of LRPPRC, BECN1 and BCL2; the interactions prevent BECN1 from forming an autophagy-inducing complex with PIK3C3. Interacts with CECR2, HEBP2, MAP1S, UXT, PPARGC1A and FOXO1. Interacts (via N-terminus) with EIF4E; the interaction promotes association of EIF4E with 4ESE-containing mRNAs. Interacts with exportin XPO1/CRM1; interacts both alone and in complex with EIF4E and 4ESE-containing mRNAs to form an EIF4E-dependent mRNA export complex. Interacts with importin IPO8; the interaction occurs when LRPPRC is in its RNA-free form and returns LRPPRC to the nucleus for further export rounds. Interacts with BECN1. In terms of tissue distribution, widely expressed. Expressed in liver, brain and a subset of small diameter sensory neurons in the dorsal root ganglion (at protein level).

It localises to the mitochondrion. Its subcellular location is the nucleus. The protein localises to the nucleoplasm. It is found in the nucleus inner membrane. The protein resides in the nucleus outer membrane. In terms of biological role, may play a role in RNA metabolism in both nuclei and mitochondria. In the nucleus binds to HNRPA1-associated poly(A) mRNAs and is part of nmRNP complexes at late stages of mRNA maturation which are possibly associated with nuclear mRNA export. Positively modulates nuclear export of mRNAs containing the EIF4E sensitivity element (4ESE) by binding simultaneously to both EIF4E and the 4ESE and acting as a platform for assembly for the RNA export complex. Also binds to exportin XPO1/CRM1 to engage the nuclear pore and traffic the bound mRNAs to the cytoplasm. May bind mature mRNA in the nucleus outer membrane. In mitochondria binds to poly(A) mRNA. Plays a role in translation or stability of mitochondrially encoded cytochrome c oxidase (COX) subunits. May be involved in transcription regulation. Cooperates with PPARGC1A to regulate certain mitochondrially encoded genes and gluconeogenic genes and may regulate docking of PPARGC1A to transcription factors. Seems to be involved in the transcription regulation of the multidrug-related genes MDR1 and MVP. Part of a nuclear factor that binds to the invMED1 element of MDR1 and MVP gene promoters. Binds single-stranded DNA. Required for maintaining mitochondrial potential. Suppresses the initiation of basal levels of autophagy and mitophagy by sustaining BCL2 levels. In Rattus norvegicus (Rat), this protein is Leucine-rich PPR motif-containing protein, mitochondrial (Lrpprc).